The chain runs to 824 residues: U-box domain-containing protein 24 (824 aa).

The region spanning 13–92 is the U-box domain; it reads GAFEAFVCPL…HEWRARNEEK (80 aa). 9 ARM repeats span residues 133–172, 175–214, 217–258, 260–299, 300–339, 341–385, 396–435, 441–481, and 486–525; these read AASK…VLVE, DDNK…ELSG, PTCE…NLDR, DANV…ELAL, ANDD…EISS, EASA…NLVA, DDDE…PAIG, VLAG…DIRV, and LLRN…EEQA.

As to quaternary structure, interacts with BZR1, BZR2, BZR3 and GSK2. Auto-ubiquitinated. In terms of processing, phosphorylated by GSK2. Phosphorylation of PUB24 increases its cellular stability.

It is found in the cytoplasm. It localises to the cytosol. Its subcellular location is the nucleus. It carries out the reaction S-ubiquitinyl-[E2 ubiquitin-conjugating enzyme]-L-cysteine + [acceptor protein]-L-lysine = [E2 ubiquitin-conjugating enzyme]-L-cysteine + N(6)-ubiquitinyl-[acceptor protein]-L-lysine.. Its pathway is protein modification; protein ubiquitination. E3 ubiquitin-protein ligase that functions as a negative regulator of brassinosteroid (BR) signaling. Targets BZR1, a positive regulator of BR signaling pathway, and promotes its degradation via the ubiquitin-26S proteasome pathway. The sequence is that of U-box domain-containing protein 24 from Oryza sativa subsp. japonica (Rice).